Reading from the N-terminus, the 837-residue chain is Valine--tRNA ligase (837 aa).

Residues 46 to 56 (PNLTGTLHIGH) carry the 'HIGH' region motif. The 'KMSKS' region motif lies at 514–518 (KMSKS). K517 is a binding site for ATP. Residues 767–837 (VDDTTQRLKS…QLIAKLTKAH (71 aa)) adopt a coiled-coil conformation.

Belongs to the class-I aminoacyl-tRNA synthetase family. ValS type 1 subfamily. As to quaternary structure, monomer.

Its subcellular location is the cytoplasm. It carries out the reaction tRNA(Val) + L-valine + ATP = L-valyl-tRNA(Val) + AMP + diphosphate. Functionally, catalyzes the attachment of valine to tRNA(Val). As ValRS can inadvertently accommodate and process structurally similar amino acids such as threonine, to avoid such errors, it has a 'posttransfer' editing activity that hydrolyzes mischarged Thr-tRNA(Val) in a tRNA-dependent manner. This Mycoplasma genitalium (strain ATCC 33530 / DSM 19775 / NCTC 10195 / G37) (Mycoplasmoides genitalium) protein is Valine--tRNA ligase.